The chain runs to 89 residues: Small ribosomal subunit protein uS14 (89 aa).

Belongs to the universal ribosomal protein uS14 family. Part of the 30S ribosomal subunit. Contacts proteins S3 and S10.

Binds 16S rRNA, required for the assembly of 30S particles and may also be responsible for determining the conformation of the 16S rRNA at the A site. The chain is Small ribosomal subunit protein uS14 from Amoebophilus asiaticus (strain 5a2).